Reading from the N-terminus, the 610-residue chain is UvrABC system protein C (610 aa).

A GIY-YIG domain is found at 16–94; sequence SQPGVYRMYD…IKLYQPRYNV (79 aa). Residues 204-239 enclose the UVR domain; it reads DQVLTQLIARMEKASQDLAFEEAARIRDQIQAVRRV.

It belongs to the UvrC family. As to quaternary structure, interacts with UvrB in an incision complex.

The protein resides in the cytoplasm. Functionally, the UvrABC repair system catalyzes the recognition and processing of DNA lesions. UvrC both incises the 5' and 3' sides of the lesion. The N-terminal half is responsible for the 3' incision and the C-terminal half is responsible for the 5' incision. This chain is UvrABC system protein C, found in Salmonella dublin (strain CT_02021853).